The following is a 316-amino-acid chain: tRNA dimethylallyltransferase (316 aa).

Residue 17–24 (GPTASGKT) coordinates ATP. 19-24 (TASGKT) lines the substrate pocket. Interaction with substrate tRNA regions lie at residues 42–45 (DSAL), 166–170 (QRLSR), and 247–252 (RCVGYR).

This sequence belongs to the IPP transferase family. Monomer. Mg(2+) is required as a cofactor.

The catalysed reaction is adenosine(37) in tRNA + dimethylallyl diphosphate = N(6)-dimethylallyladenosine(37) in tRNA + diphosphate. Functionally, catalyzes the transfer of a dimethylallyl group onto the adenine at position 37 in tRNAs that read codons beginning with uridine, leading to the formation of N6-(dimethylallyl)adenosine (i(6)A). The polypeptide is tRNA dimethylallyltransferase (Salmonella enteritidis PT4 (strain P125109)).